The sequence spans 95 residues: Small ribosomal subunit protein bS20 (95 aa).

The protein belongs to the bacterial ribosomal protein bS20 family.

Functionally, binds directly to 16S ribosomal RNA. The chain is Small ribosomal subunit protein bS20 from Ehrlichia canis (strain Jake).